The sequence spans 115 residues: NADH-ubiquinone oxidoreductase chain 3 (115 aa).

The next 3 membrane-spanning stretches (helical) occupy residues 3–23 (FVLILMTNTLLALLLMIITFW), 55–75 (FFLVAITFLLFDLEIALLLPL), and 84–104 (LPLMVMSSLLLITILALSLAY).

Belongs to the complex I subunit 3 family. As to quaternary structure, core subunit of respiratory chain NADH dehydrogenase (Complex I) which is composed of 45 different subunits. Interacts with TMEM186. Interacts with TMEM242.

It is found in the mitochondrion inner membrane. It catalyses the reaction a ubiquinone + NADH + 5 H(+)(in) = a ubiquinol + NAD(+) + 4 H(+)(out). Core subunit of the mitochondrial membrane respiratory chain NADH dehydrogenase (Complex I) which catalyzes electron transfer from NADH through the respiratory chain, using ubiquinone as an electron acceptor. Essential for the catalytic activity of complex I. The sequence is that of NADH-ubiquinone oxidoreductase chain 3 from Pan paniscus (Pygmy chimpanzee).